A 230-amino-acid chain; its full sequence is MYSIKMRSSNQDVHISGAETICEFDKIEQTVQRFYNKGFFHENGQPDFLNIKIQKIMEPIQQIKALQIIEDDKANLQHLTQECGVTEQALNQGMTYIKNETVYTGAIILSAISGKRLDSFGQRGIRATHFSFEDINNKGDLNERVTDALAIASCINAHPYVKGELCVSDDLTYTTGYFASAKIGYHRLFDIKPVNTRYGGRIIFVDDRIDLNHYISFLESTPKQVVYERV.

It belongs to the BioW family. As to quaternary structure, homodimer. It depends on Mg(2+) as a cofactor.

It catalyses the reaction heptanedioate + ATP + CoA = 6-carboxyhexanoyl-CoA + AMP + diphosphate. It functions in the pathway metabolic intermediate metabolism; pimeloyl-CoA biosynthesis; pimeloyl-CoA from pimelate: step 1/1. In terms of biological role, catalyzes the transformation of pimelate into pimeloyl-CoA with concomitant hydrolysis of ATP to AMP. In Staphylococcus aureus (strain MSSA476), this protein is 6-carboxyhexanoate--CoA ligase.